The following is a 316-amino-acid chain: 4-hydroxy-3-methylbut-2-enyl diphosphate reductase (316 aa).

Cys-12 provides a ligand contact to [4Fe-4S] cluster. (2E)-4-hydroxy-3-methylbut-2-enyl diphosphate is bound by residues His-41 and His-74. Dimethylallyl diphosphate contacts are provided by His-41 and His-74. Positions 41 and 74 each coordinate isopentenyl diphosphate. Cys-96 contributes to the [4Fe-4S] cluster binding site. Residue His-124 coordinates (2E)-4-hydroxy-3-methylbut-2-enyl diphosphate. A dimethylallyl diphosphate-binding site is contributed by His-124. An isopentenyl diphosphate-binding site is contributed by His-124. The active-site Proton donor is the Glu-126. Position 169 (Thr-169) interacts with (2E)-4-hydroxy-3-methylbut-2-enyl diphosphate. Position 199 (Cys-199) interacts with [4Fe-4S] cluster. Positions 227, 228, 229, and 271 each coordinate (2E)-4-hydroxy-3-methylbut-2-enyl diphosphate. Residues Ser-227, Ser-228, Asn-229, and Ser-271 each coordinate dimethylallyl diphosphate. The isopentenyl diphosphate site is built by Ser-227, Ser-228, Asn-229, and Ser-271.

The protein belongs to the IspH family. It depends on [4Fe-4S] cluster as a cofactor.

It carries out the reaction isopentenyl diphosphate + 2 oxidized [2Fe-2S]-[ferredoxin] + H2O = (2E)-4-hydroxy-3-methylbut-2-enyl diphosphate + 2 reduced [2Fe-2S]-[ferredoxin] + 2 H(+). It catalyses the reaction dimethylallyl diphosphate + 2 oxidized [2Fe-2S]-[ferredoxin] + H2O = (2E)-4-hydroxy-3-methylbut-2-enyl diphosphate + 2 reduced [2Fe-2S]-[ferredoxin] + 2 H(+). The protein operates within isoprenoid biosynthesis; dimethylallyl diphosphate biosynthesis; dimethylallyl diphosphate from (2E)-4-hydroxy-3-methylbutenyl diphosphate: step 1/1. It participates in isoprenoid biosynthesis; isopentenyl diphosphate biosynthesis via DXP pathway; isopentenyl diphosphate from 1-deoxy-D-xylulose 5-phosphate: step 6/6. Functionally, catalyzes the conversion of 1-hydroxy-2-methyl-2-(E)-butenyl 4-diphosphate (HMBPP) into a mixture of isopentenyl diphosphate (IPP) and dimethylallyl diphosphate (DMAPP). Acts in the terminal step of the DOXP/MEP pathway for isoprenoid precursor biosynthesis. This Xylella fastidiosa (strain M23) protein is 4-hydroxy-3-methylbut-2-enyl diphosphate reductase.